A 346-amino-acid polypeptide reads, in one-letter code: N(4)-(beta-N-acetylglucosaminyl)-L-asparaginase (346 aa).

A signal peptide spans 1–23 (MERKSNLSLLLLLLVLGMPLVRG). N-linked (GlcNAc...) asparagine glycosylation is present at Asn38. 2 disulfide bridges follow: Cys64-Cys69 and Cys163-Cys179. Thr206 serves as the catalytic Nucleophile. Residues 234–237 (RVGD) and 257–260 (TGDG) contribute to the substrate site. A disulfide bridge links Cys286 with Cys306. Asn310 is a glycosylation site (N-linked (GlcNAc...) asparagine). The cysteines at positions 317 and 345 are disulfide-linked.

The protein belongs to the Ntn-hydrolase family. In terms of assembly, heterotetramer of two alpha and two beta chains arranged as a dimer of alpha/beta heterodimers. In terms of processing, cleaved into an alpha and beta chain by autocatalysis; this activates the enzyme. The N-terminal residue of the beta subunit is responsible for the nucleophile hydrolase activity. N-glycosylated.

It localises to the lysosome. The catalysed reaction is N(4)-(beta-N-acetyl-D-glucosaminyl)-L-asparagine + H2O = N-acetyl-beta-D-glucosaminylamine + L-aspartate + H(+). Cleaves the GlcNAc-Asn bond which joins oligosaccharides to the peptide of asparagine-linked glycoproteins. The sequence is that of N(4)-(beta-N-acetylglucosaminyl)-L-asparaginase (Aga) from Mus musculus (Mouse).